The primary structure comprises 419 residues: D-amino acid dehydrogenase (419 aa).

Residue 3-17 coordinates FAD; it reads VLVLGAGVAGVSSVW.

The protein belongs to the DadA oxidoreductase family. It depends on FAD as a cofactor.

It catalyses the reaction a D-alpha-amino acid + A + H2O = a 2-oxocarboxylate + AH2 + NH4(+). It functions in the pathway amino-acid degradation; D-alanine degradation; NH(3) and pyruvate from D-alanine: step 1/1. In terms of biological role, oxidative deamination of D-amino acids. In Neisseria gonorrhoeae (strain ATCC 700825 / FA 1090), this protein is D-amino acid dehydrogenase.